Reading from the N-terminus, the 433-residue chain is Enolase (433 aa).

Residue Gln166 coordinates (2R)-2-phosphoglycerate. The active-site Proton donor is Glu208. Mg(2+)-binding residues include Asp245, Glu289, and Asp316. (2R)-2-phosphoglycerate contacts are provided by Lys341, Arg370, Ser371, and Lys392. Lys341 (proton acceptor) is an active-site residue.

The protein belongs to the enolase family. It depends on Mg(2+) as a cofactor.

The protein localises to the cytoplasm. Its subcellular location is the secreted. It localises to the cell surface. The enzyme catalyses (2R)-2-phosphoglycerate = phosphoenolpyruvate + H2O. Its pathway is carbohydrate degradation; glycolysis; pyruvate from D-glyceraldehyde 3-phosphate: step 4/5. Catalyzes the reversible conversion of 2-phosphoglycerate (2-PG) into phosphoenolpyruvate (PEP). It is essential for the degradation of carbohydrates via glycolysis. The sequence is that of Enolase from Acetivibrio thermocellus (strain ATCC 27405 / DSM 1237 / JCM 9322 / NBRC 103400 / NCIMB 10682 / NRRL B-4536 / VPI 7372) (Clostridium thermocellum).